Reading from the N-terminus, the 947-residue chain is Protein translocase subunit SecA 1 (947 aa).

ATP-binding positions include Gln-83, 101–105 (GEGKT), and Asp-490. Positions 860 to 947 (AKAQEQTGQG…KTSKPTRRRG (88 aa)) are disordered. A compositionally biased stretch (basic and acidic residues) spans 925 to 934 (TRRERREAAR). Over residues 935–947 (KQAKTSKPTRRRG) the composition is skewed to basic residues.

It belongs to the SecA family. In terms of assembly, monomer and homodimer. Part of the essential Sec protein translocation apparatus which comprises SecA, SecYEG and auxiliary proteins SecDF. Other proteins may also be involved.

The protein localises to the cell membrane. It localises to the cytoplasm. It catalyses the reaction ATP + H2O + cellular proteinSide 1 = ADP + phosphate + cellular proteinSide 2.. Its function is as follows. Part of the Sec protein translocase complex. Interacts with the SecYEG preprotein conducting channel. Has a central role in coupling the hydrolysis of ATP to the transfer of proteins into and across the cell membrane, serving as an ATP-driven molecular motor driving the stepwise translocation of polypeptide chains across the membrane. The protein is Protein translocase subunit SecA 1 of Mycobacterium sp. (strain JLS).